The chain runs to 213 residues: Protein FAM156A/FAM156B (213 aa).

Met1 is modified (N-acetylmethionine). The tract at residues Met1–Leu62 is disordered. Residues Asn8–Glu37 show a composition bias toward polar residues. Position 114 is a phosphoserine (Ser114). The helical transmembrane segment at Trp154–Thr170 threads the bilayer. A disordered region spans residues Thr165–Ser198. The segment covering Thr186–Glu197 has biased composition (basic and acidic residues).

The protein localises to the membrane. The polypeptide is Protein FAM156A/FAM156B (FAM156A) (Homo sapiens (Human)).